We begin with the raw amino-acid sequence, 100 residues long: Co-chaperonin GroES (100 aa).

The protein belongs to the GroES chaperonin family. As to quaternary structure, heptamer of 7 subunits arranged in a ring. Interacts with the chaperonin GroEL.

It localises to the cytoplasm. In terms of biological role, together with the chaperonin GroEL, plays an essential role in assisting protein folding. The GroEL-GroES system forms a nano-cage that allows encapsulation of the non-native substrate proteins and provides a physical environment optimized to promote and accelerate protein folding. GroES binds to the apical surface of the GroEL ring, thereby capping the opening of the GroEL channel. The chain is Co-chaperonin GroES from Mycolicibacterium paratuberculosis (strain ATCC BAA-968 / K-10) (Mycobacterium paratuberculosis).